Consider the following 225-residue polypeptide: Methylthioribulose-1-phosphate dehydratase (225 aa).

His106 and His108 together coordinate Zn(2+).

It belongs to the aldolase class II family. MtnB subfamily. Zn(2+) serves as cofactor.

The catalysed reaction is 5-(methylsulfanyl)-D-ribulose 1-phosphate = 5-methylsulfanyl-2,3-dioxopentyl phosphate + H2O. It functions in the pathway amino-acid biosynthesis; L-methionine biosynthesis via salvage pathway; L-methionine from S-methyl-5-thio-alpha-D-ribose 1-phosphate: step 2/6. Functionally, catalyzes the dehydration of methylthioribulose-1-phosphate (MTRu-1-P) into 2,3-diketo-5-methylthiopentyl-1-phosphate (DK-MTP-1-P). The polypeptide is Methylthioribulose-1-phosphate dehydratase (Xanthomonas oryzae pv. oryzae (strain PXO99A)).